Consider the following 816-residue polypeptide: Pentatricopeptide repeat-containing protein At5g12100, mitochondrial (816 aa).

A mitochondrion-targeting transit peptide spans 1-39; sequence MVTRLRLVSRSSRYATVKFTDSVSACSCRRLFSASTDPE. A disordered region spans residues 34-57; sequence ASTDPEPESQPEQAPPTNPVTGDE. 20 PPR repeats span residues 108-142, 143-177, 178-212, 213-247, 248-282, 283-317, 318-352, 353-387, 388-422, 423-457, 458-492, 493-527, 528-562, 563-597, 598-632, 633-662, 664-698, 699-733, 734-768, and 769-803; these read HDFS…GIYP, SSDS…DFRP, SKFM…RIYP, SVFI…RLLP, SLIT…HIEP, SLIT…GFVP, DAFT…GVKM, NAYT…GLVP, NEVI…GMKP, DHLA…GVSP, SVET…GTMP, NVVS…GVSP, KVRI…GIEL, NLVT…GLKP, DVFT…GIKP, TLKT…MSLK, DLLV…SIGL, DKTT…EMEP, EADT…GFLL, and DVCI…MLGD.

The protein belongs to the PPR family. P subfamily.

The protein resides in the mitochondrion. This chain is Pentatricopeptide repeat-containing protein At5g12100, mitochondrial, found in Arabidopsis thaliana (Mouse-ear cress).